The sequence spans 64 residues: MKAKELRELDNAALNEKLAEARQELFNLRFQHATAQLENTQRLSDVKKDIAKILTVQREKELGA.

Belongs to the universal ribosomal protein uL29 family.

This chain is Large ribosomal subunit protein uL29, found in Maridesulfovibrio salexigens (strain ATCC 14822 / DSM 2638 / NCIMB 8403 / VKM B-1763) (Desulfovibrio salexigens).